A 450-amino-acid polypeptide reads, in one-letter code: Chromosomal replication initiator protein DnaA (450 aa).

Positions 1–71 (MEDVWLQAQS…SVRSLTDSHF (71 aa)) are domain I, interacts with DnaA modulators. The segment at 71-113 (FQVELQVAARQQEKTAKSPRKSHTEDELGPVESEKCAPAEFST) is domain II. The interval 82–103 (QEKTAKSPRKSHTEDELGPVES) is disordered. The domain III, AAA+ region stretch occupies residues 114–330 (NLNAKYTFDT…GMLIRLGAVA (217 aa)). Residues G158, G160, K161, and T162 each coordinate ATP. The tract at residues 331 to 450 (SLTGKNITLD…IETLRKGLLN (120 aa)) is domain IV, binds dsDNA.

It belongs to the DnaA family. In terms of assembly, oligomerizes as a right-handed, spiral filament on DNA at oriC.

The protein resides in the cytoplasm. Its function is as follows. Plays an essential role in the initiation and regulation of chromosomal replication. ATP-DnaA binds to the origin of replication (oriC) to initiate formation of the DNA replication initiation complex once per cell cycle. Binds the DnaA box (a 9 base pair repeat at the origin) and separates the double-stranded (ds)DNA. Forms a right-handed helical filament on oriC DNA; dsDNA binds to the exterior of the filament while single-stranded (ss)DNA is stabiized in the filament's interior. The ATP-DnaA-oriC complex binds and stabilizes one strand of the AT-rich DNA unwinding element (DUE), permitting loading of DNA polymerase. After initiation quickly degrades to an ADP-DnaA complex that is not apt for DNA replication. Binds acidic phospholipids. The polypeptide is Chromosomal replication initiator protein DnaA (Geobacter metallireducens (strain ATCC 53774 / DSM 7210 / GS-15)).